The chain runs to 209 residues: Large ribosomal subunit protein bL25 (209 aa).

Positions 190–209 are disordered; that stretch reads GLKSADDEAEGEDAEEAAAE. The span at 196–209 shows a compositional bias: acidic residues; it reads DEAEGEDAEEAAAE.

Belongs to the bacterial ribosomal protein bL25 family. CTC subfamily. Part of the 50S ribosomal subunit; part of the 5S rRNA/L5/L18/L25 subcomplex. Contacts the 5S rRNA. Binds to the 5S rRNA independently of L5 and L18.

Functionally, this is one of the proteins that binds to the 5S RNA in the ribosome where it forms part of the central protuberance. In Ruegeria sp. (strain TM1040) (Silicibacter sp.), this protein is Large ribosomal subunit protein bL25.